The following is a 59-amino-acid chain: Large ribosomal subunit protein uL30 (59 aa).

Belongs to the universal ribosomal protein uL30 family. As to quaternary structure, part of the 50S ribosomal subunit.

This Histophilus somni (strain 129Pt) (Haemophilus somnus) protein is Large ribosomal subunit protein uL30.